A 93-amino-acid polypeptide reads, in one-letter code: Small ribosomal subunit protein uS19 (93 aa).

The protein belongs to the universal ribosomal protein uS19 family.

Functionally, protein S19 forms a complex with S13 that binds strongly to the 16S ribosomal RNA. This Pediococcus pentosaceus (strain ATCC 25745 / CCUG 21536 / LMG 10740 / 183-1w) protein is Small ribosomal subunit protein uS19.